Reading from the N-terminus, the 778-residue chain is LPS-assembly protein LptD (778 aa).

Positions 1-23 (MKTRYSVLSVAMTAAFYTQYAQA) are cleaved as a signal peptide.

It belongs to the LptD family. Component of the lipopolysaccharide transport and assembly complex. Interacts with LptE and LptA.

It is found in the cell outer membrane. In terms of biological role, together with LptE, is involved in the assembly of lipopolysaccharide (LPS) at the surface of the outer membrane. This chain is LPS-assembly protein LptD, found in Actinobacillus pleuropneumoniae serotype 5b (strain L20).